The sequence spans 874 residues: Endothelial PAS domain-containing protein 1 (874 aa).

Residues 1 to 23 are disordered; the sequence is MTADKEKKRSSSELRKEKSRDAA. The region spanning 14–67 is the bHLH domain; it reads LRKEKSRDAARCRRSKETEVFYELAHELPLPHSVSSHLDKASIMRLAISFLRTH. Residues 26 to 53 are DNA-binding; it reads RRSKETEVFYELAHELPLPHSVSSHLDK. The PAS 1 domain maps to 84-154; sequence DQQMDNLYLK…ENLTLKNGSG (71 aa). A required for heterodimer formation with ARNT region spans residues 171-192; sequence RMKCTVTNRGRTVNLKSATWKV. A PAS 2 domain is found at 230 to 300; the sequence is QHPSHMDIPL…KSHQNLCTKG (71 aa). The PAC domain occupies 304 to 347; that stretch reads SGQYRMLAKHGGYVWLETQGTVIYNPRNLQPQCIMCVNYVLSEI. Proline 405 is modified (4-hydroxyproline). A disordered region spans residues 438-489; it reads WVSGLRSHSAQSESGSLPAFTVPQADTPGNTTPSASSSSSCSTPSSPEDYYS. A compositionally biased stretch (polar residues) spans 443–452; that stretch reads RSHSAQSESG. Over residues 464 to 484 the composition is skewed to low complexity; it reads TPGNTTPSASSSSSCSTPSSP. An NTAD region spans residues 495 to 541; that stretch reads LKIEVIEKLFAMDTEPRDPGSTQTDFSELDLETLAPYIPMDGEDFQL. Proline 530 is subject to 4-hydroxyproline. Positions 777–803 are disordered; it reads LGQPLRHLPPPQPPSTRSSGENAKTGF. Positions 834 to 874 are CTAD; that stretch reads SFEPYLLPELTRYDCEVNVPVPGSSTLLQGRDLLRALDQAT. Threonine 844 is subject to Phosphothreonine. A (3S)-3-hydroxyasparagine modification is found at asparagine 851.

As to quaternary structure, interacts with HIF3A isoform 2. Efficient DNA binding requires dimerization with another bHLH protein. Heterodimerizes with ARNT; heterodimer binds to core DNA sequence 5'-TACGTG-3' within the hypoxia response element (HRE) of target gene promoters. Interacts with CREBBP. Interacts with EGLN1. Interacts with VHL. Post-translationally, in normoxia, is probably hydroxylated on Pro-405 and Pro-530 by EGLN1/PHD1, EGLN2/PHD2 and/or EGLN3/PHD3. The hydroxylated prolines promote interaction with VHL, initiating rapid ubiquitination and subsequent proteasomal degradation. Under hypoxia, proline hydroxylation is impaired and ubiquitination is attenuated, resulting in stabilization. In terms of processing, in normoxia, is hydroxylated on Asn-851 by HIF1AN thus probably abrogating interaction with CREBBP and EP300 and preventing transcriptional activation. Phosphorylated on multiple sites in the CTAD. Post-translationally, the iron and 2-oxoglutarate dependent 3-hydroxylation of asparagine is (S) stereospecific within HIF CTAD domains. As to expression, expressed in most tissues, with highest levels in lung, followed by heart, kidney, brain and liver. Predominantly expressed in endothelial cells. Also found in smooth muscle cells of the uterus, neurons, and brown adipose tissue. High expression in embryonic choroid plexus and kidney glomeruli.

The protein localises to the nucleus. The protein resides in the nucleus speckle. In terms of biological role, transcription factor involved in the induction of oxygen regulated genes. Heterodimerizes with ARNT; heterodimer binds to core DNA sequence 5'-TACGTG-3' within the hypoxia response element (HRE) of target gene promoters. Regulates the vascular endothelial growth factor (VEGF) expression and seems to be implicated in the development of blood vessels and the tubular system of lung. May also play a role in the formation of the endothelium that gives rise to the blood brain barrier. Potent activator of the Tie-2 tyrosine kinase expression. Activation requires recruitment of transcriptional coactivators such as CREBBP and probably EP300. Interaction with redox regulatory protein APEX seems to activate CTAD. The protein is Endothelial PAS domain-containing protein 1 (Epas1) of Mus musculus (Mouse).